A 166-amino-acid polypeptide reads, in one-letter code: Regulatory protein RecX (166 aa).

The protein belongs to the RecX family.

The protein localises to the cytoplasm. In terms of biological role, modulates RecA activity. This Salmonella newport (strain SL254) protein is Regulatory protein RecX.